Here is a 234-residue protein sequence, read N- to C-terminus: Phosphoribosylaminoimidazole-succinocarboxamide synthase (234 aa).

This sequence belongs to the SAICAR synthetase family.

The catalysed reaction is 5-amino-1-(5-phospho-D-ribosyl)imidazole-4-carboxylate + L-aspartate + ATP = (2S)-2-[5-amino-1-(5-phospho-beta-D-ribosyl)imidazole-4-carboxamido]succinate + ADP + phosphate + 2 H(+). It participates in purine metabolism; IMP biosynthesis via de novo pathway; 5-amino-1-(5-phospho-D-ribosyl)imidazole-4-carboxamide from 5-amino-1-(5-phospho-D-ribosyl)imidazole-4-carboxylate: step 1/2. The sequence is that of Phosphoribosylaminoimidazole-succinocarboxamide synthase from Staphylococcus epidermidis (strain ATCC 35984 / DSM 28319 / BCRC 17069 / CCUG 31568 / BM 3577 / RP62A).